A 160-amino-acid chain; its full sequence is Putative 4-hydroxy-4-methyl-2-oxoglutarate aldolase (160 aa).

Substrate contacts are provided by residues 75–78 (GDQL) and Arg97. Asp98 provides a ligand contact to a divalent metal cation.

Belongs to the class II aldolase/RraA-like family. Homotrimer. The cofactor is a divalent metal cation.

The enzyme catalyses 4-hydroxy-4-methyl-2-oxoglutarate = 2 pyruvate. The catalysed reaction is oxaloacetate + H(+) = pyruvate + CO2. Its function is as follows. Catalyzes the aldol cleavage of 4-hydroxy-4-methyl-2-oxoglutarate (HMG) into 2 molecules of pyruvate. Also contains a secondary oxaloacetate (OAA) decarboxylase activity due to the common pyruvate enolate transition state formed following C-C bond cleavage in the retro-aldol and decarboxylation reactions. This chain is Putative 4-hydroxy-4-methyl-2-oxoglutarate aldolase, found in Vibrio vulnificus (strain YJ016).